The following is a 119-amino-acid chain: Large ribosomal subunit protein bL20 (119 aa).

It belongs to the bacterial ribosomal protein bL20 family.

Functionally, binds directly to 23S ribosomal RNA and is necessary for the in vitro assembly process of the 50S ribosomal subunit. It is not involved in the protein synthesizing functions of that subunit. The chain is Large ribosomal subunit protein bL20 from Bordetella bronchiseptica (strain ATCC BAA-588 / NCTC 13252 / RB50) (Alcaligenes bronchisepticus).